The chain runs to 178 residues: Photosystem I assembly protein Ycf4 (178 aa).

2 helical membrane passes run 19 to 39 (FLVA…SLSS) and 61 to 81 (LVMG…WYVI).

It belongs to the Ycf4 family.

It localises to the cellular thylakoid membrane. Its function is as follows. Seems to be required for the assembly of the photosystem I complex. The sequence is that of Photosystem I assembly protein Ycf4 from Synechococcus sp. (strain CC9902).